Consider the following 249-residue polypeptide: uncharacterized protein (249 aa).

Its subcellular location is the cytoplasm. It localises to the nucleus. The protein resides in the nucleolus. This is an uncharacterized protein from Schizosaccharomyces pombe (strain 972 / ATCC 24843) (Fission yeast).